The primary structure comprises 45 residues: Small polypeptide DEVIL 23 (45 aa).

A required for DVL/RTFL small polypeptide activity region spans residues 13–44; sequence KSTLRCWDWCKEQRTRAYIIWRCLIFLLRWDD. The helical transmembrane segment at 22–39 threads the bilayer; it reads CKEQRTRAYIIWRCLIFL.

Belongs to the DVL/RTFL small polypeptides family.

The protein resides in the cell membrane. Functionally, small polypeptide acting as a regulatory molecule which coordinates cellular responses required for differentiation, growth and development, probably by restricting polar cell proliferation in lateral organs and coordinating socket cell recruitment and differentiation at trichome sites. The polypeptide is Small polypeptide DEVIL 23 (Arabidopsis thaliana (Mouse-ear cress)).